Consider the following 885-residue polypeptide: DNA mismatch repair protein MutS (885 aa).

Position 626 to 633 (G626 to S633) interacts with ATP.

Belongs to the DNA mismatch repair MutS family.

This protein is involved in the repair of mismatches in DNA. It is possible that it carries out the mismatch recognition step. This protein has a weak ATPase activity. The chain is DNA mismatch repair protein MutS from Burkholderia ambifaria (strain MC40-6).